We begin with the raw amino-acid sequence, 502 residues long: Probable cytosol aminopeptidase (502 aa).

Mn(2+)-binding residues include lysine 267 and aspartate 272. Lysine 279 is an active-site residue. Mn(2+) is bound by residues aspartate 290, aspartate 349, and glutamate 351. Arginine 353 is an active-site residue.

The protein belongs to the peptidase M17 family. The cofactor is Mn(2+).

It localises to the cytoplasm. It catalyses the reaction Release of an N-terminal amino acid, Xaa-|-Yaa-, in which Xaa is preferably Leu, but may be other amino acids including Pro although not Arg or Lys, and Yaa may be Pro. Amino acid amides and methyl esters are also readily hydrolyzed, but rates on arylamides are exceedingly low.. The catalysed reaction is Release of an N-terminal amino acid, preferentially leucine, but not glutamic or aspartic acids.. In terms of biological role, presumably involved in the processing and regular turnover of intracellular proteins. Catalyzes the removal of unsubstituted N-terminal amino acids from various peptides. This is Probable cytosol aminopeptidase from Aeromonas hydrophila subsp. hydrophila (strain ATCC 7966 / DSM 30187 / BCRC 13018 / CCUG 14551 / JCM 1027 / KCTC 2358 / NCIMB 9240 / NCTC 8049).